The sequence spans 443 residues: ATP-dependent protease ATPase subunit HslU (443 aa).

Residues Ile-18, 60-65, Asp-256, Glu-321, and Arg-393 each bind ATP; that span reads GVGKTE.

Belongs to the ClpX chaperone family. HslU subfamily. In terms of assembly, a double ring-shaped homohexamer of HslV is capped on each side by a ring-shaped HslU homohexamer. The assembly of the HslU/HslV complex is dependent on binding of ATP.

The protein localises to the cytoplasm. In terms of biological role, ATPase subunit of a proteasome-like degradation complex; this subunit has chaperone activity. The binding of ATP and its subsequent hydrolysis by HslU are essential for unfolding of protein substrates subsequently hydrolyzed by HslV. HslU recognizes the N-terminal part of its protein substrates and unfolds these before they are guided to HslV for hydrolysis. This Pectobacterium carotovorum subsp. carotovorum (strain PC1) protein is ATP-dependent protease ATPase subunit HslU.